Consider the following 83-residue polypeptide: MKTLLLTMVVVTIVCLDLGYTLKCHNTQLPFIYKTCPEGKNLCFKATLKKFPLKFPVKRGCADNCPKNSALLKYVCCSTDKCN.

An N-terminal signal peptide occupies residues 1–21 (MKTLLLTMVVVTIVCLDLGYT). Intrachain disulfides connect Cys-24–Cys-43, Cys-36–Cys-61, Cys-65–Cys-76, and Cys-77–Cys-82.

The protein belongs to the three-finger toxin family. Short-chain subfamily. Orphan group XV sub-subfamily. In terms of tissue distribution, expressed by the venom gland.

Its subcellular location is the secreted. The protein resides in the target cell membrane. Its function is as follows. Non-cytotoxic protein that does not show lytic and hemolytic activities, but can induce aggregation and fusion of sphingomyelin vesicles. It binds to integrin alpha-V/beta-3 (ITGAV/ITGB3) with high affinity, and it inhibits osteoclast differentiation and bone resorption in mice, probably due to binding to integrin alpha-V/beta-3. In Naja atra (Chinese cobra), this protein is Cytotoxin A5.